The following is a 296-amino-acid chain: MEHFRNIGIIGRLGSTQVLDTVRRLKKFLLERHLHVILEDTIAEILPGHGLQTSSRKMLGEVCDMVIVVGGDGSLLGAARALARHNVPVLGINRGSLGFLTDIRPDELEVEVAKVLDGHYLVENRFLLQAEVRRHGEAIGQGDALNDVVLHPGKSTRMIEFELYIDGQFVCSQKADGLIVATPTGSTAYALSAGGPIMHPKLDAIVIVPMYPHMLSSRPIVVDGNSELKIVVSKDMQIYPQVSCDGQNHFTCAPGDTITVSKKAQKLRLIHPLDHNYYEVCRTKLGWGSRLGGGGD.

Asp-72 (proton acceptor) is an active-site residue. NAD(+)-binding positions include 72–73 (DG), 146–147 (ND), Arg-157, Lys-174, Asp-176, 187–192 (TAYALS), and Gln-247.

Belongs to the NAD kinase family. It depends on a divalent metal cation as a cofactor.

The protein localises to the cytoplasm. The catalysed reaction is NAD(+) + ATP = ADP + NADP(+) + H(+). Involved in the regulation of the intracellular balance of NAD and NADP, and is a key enzyme in the biosynthesis of NADP. Catalyzes specifically the phosphorylation on 2'-hydroxyl of the adenosine moiety of NAD to yield NADP. The protein is NAD kinase of Pseudomonas fluorescens (strain SBW25).